A 388-amino-acid polypeptide reads, in one-letter code: Processive diacylglycerol beta-glucosyltransferase (388 aa).

The protein belongs to the glycosyltransferase 28 family. UgtP subfamily.

The protein localises to the cell membrane. It catalyses the reaction a 1,2-diacyl-3-O-(beta-D-glucopyranosyl)-sn-glycerol + UDP-alpha-D-glucose = a 1,2-diacyl-3-O-(beta-D-Glc-(1-&gt;6)-beta-D-Glc)-sn-glycerol + UDP + H(+). It carries out the reaction a 1,2-diacyl-3-O-(beta-D-Glc-(1-&gt;6)-beta-D-Glc)-sn-glycerol + UDP-alpha-D-glucose = a 1,2-diacyl-3-O-(beta-D-Glc-(1-&gt;6)-beta-D-Glc-(1-&gt;6)-beta-D-Glc)-sn-glycerol + UDP + H(+). The catalysed reaction is a 1,2-diacyl-sn-glycerol + UDP-alpha-D-glucose = a 1,2-diacyl-3-O-(beta-D-glucopyranosyl)-sn-glycerol + UDP + H(+). Its pathway is glycolipid metabolism; diglucosyl-diacylglycerol biosynthesis. Processive glucosyltransferase involved in the biosynthesis of both the bilayer- and non-bilayer-forming membrane glucolipids. Is able to successively transfer up to three glucosyl residues to diacylglycerol (DAG), thereby catalyzing the formation of beta-monoglucosyl-DAG (3-O-(beta-D-glucopyranosyl)-1,2-diacyl-sn-glycerol), beta-diglucosyl-DAG (3-O-(beta-D-glucopyranosyl-beta-(1-&gt;6)-D-glucopyranosyl)-1,2-diacyl-sn-glycerol) and beta-triglucosyl-DAG (3-O-(beta-D-glucopyranosyl-beta-(1-&gt;6)-D-glucopyranosyl-beta-(1-&gt;6)-D-glucopyranosyl)-1,2-diacyl-sn-glycerol). Beta-diglucosyl-DAG is the predominant glycolipid found in Bacillales and is also used as a membrane anchor for lipoteichoic acid (LTA). In Bacillus cereus (strain ATCC 14579 / DSM 31 / CCUG 7414 / JCM 2152 / NBRC 15305 / NCIMB 9373 / NCTC 2599 / NRRL B-3711), this protein is Processive diacylglycerol beta-glucosyltransferase.